Here is a 190-residue protein sequence, read N- to C-terminus: Small ribosomal subunit protein eS7 (190 aa).

Belongs to the eukaryotic ribosomal protein eS7 family. In terms of assembly, component of the small ribosomal subunit. Part of the small subunit (SSU) processome, composed of more than 70 proteins and the RNA chaperone small nucleolar RNA (snoRNA) U3.

The protein resides in the cytoplasm. The protein localises to the cytoskeleton. Its subcellular location is the microtubule organizing center. It localises to the centrosome. It is found in the nucleus. The protein resides in the nucleolus. Component of the small ribosomal subunit. The ribosome is a large ribonucleoprotein complex responsible for the synthesis of proteins in the cell. Required for rRNA maturation. Part of the small subunit (SSU) processome, first precursor of the small eukaryotic ribosomal subunit. During the assembly of the SSU processome in the nucleolus, many ribosome biogenesis factors, an RNA chaperone and ribosomal proteins associate with the nascent pre-rRNA and work in concert to generate RNA folding, modifications, rearrangements and cleavage as well as targeted degradation of pre-ribosomal RNA by the RNA exosome. The protein is Small ribosomal subunit protein eS7 (RpS7) of Spodoptera frugiperda (Fall armyworm).